Reading from the N-terminus, the 1137-residue chain is Dendrite extension defective protein 1 (1137 aa).

The first 41 residues, Met1–Cys41, serve as a signal peptide directing secretion. Topologically, residues Lys43–Ala1005 are extracellular. The NIDO 1 domain occupies Pro163–Leu302. N-linked (GlcNAc...) asparagine glycosylation is found at Asn240 and Asn416. An EGF-like; calcium-binding domain is found at Asp409–Ser450. 3 disulfide bridges follow: Cys413/Cys426, Cys420/Cys435, and Cys437/Cys449. The NIDO 2 domain occupies Pro519 to Ala659. N-linked (GlcNAc...) asparagine glycosylation is present at Asn571. Positions Ile738 to Ala749 are enriched in polar residues. 5 disordered regions span residues Ile738–Ile765, Phe795–Ala856, Gln878–Ser897, Thr906–His933, and Asn978–Glu998. An N-linked (GlcNAc...) asparagine glycan is attached at Asn756. Residues Asn798–Arg809 are compositionally biased toward polar residues. Residues Pro819–Thr833 show a composition bias toward basic and acidic residues. The span at Thr906–Ile915 shows a compositional bias: acidic residues. Over residues Ser916–His933 the composition is skewed to low complexity. Over residues Asn978–Val992 the composition is skewed to polar residues. Residues Ile1006–Val1026 form a helical membrane-spanning segment. The Cytoplasmic segment spans residues Val1027–Ser1037. Positions Ala1106–Thr1125 are disordered.

May be proteolytically cleaved and secreted.

It is found in the membrane. The protein resides in the cell projection. It localises to the dendrite. Its subcellular location is the secreted. In terms of biological role, along with dyf-7, enables neurite growth and maintenance by anchoring amphid dendritic tips during neuron cell body migration in embryonic and larval development. Promotes seam cell remodeling during the dauer phase. Plays a role in positively regulating locomotion during the dauer phase. In Caenorhabditis elegans, this protein is Dendrite extension defective protein 1.